A 63-amino-acid chain; its full sequence is UPF0337 protein PSPTO_1596 (63 aa).

The segment at 20-63 (KQAVGKATDNTKLQAEGKAQELKGEGQQAKGEVKDAVKKGVDKV) is disordered. The span at 50–63 (GEVKDAVKKGVDKV) shows a compositional bias: basic and acidic residues.

The protein belongs to the UPF0337 (CsbD) family.

In Pseudomonas syringae pv. tomato (strain ATCC BAA-871 / DC3000), this protein is UPF0337 protein PSPTO_1596.